A 299-amino-acid chain; its full sequence is GTPase Era (299 aa).

Positions 5–172 (KSGFVSIIGR…IDVLKTYLPE (168 aa)) constitute an Era-type G domain. The segment at 13 to 20 (GRPNVGKS) is G1. Position 13–20 (13–20 (GRPNVGKS)) interacts with GTP. The tract at residues 39-43 (QTTRN) is G2. Residues 60 to 63 (DTPG) are G3. GTP contacts are provided by residues 60 to 64 (DTPGI) and 122 to 125 (NKID). The segment at 122–125 (NKID) is G4. Residues 151–153 (ISA) are G5. The region spanning 203-280 (TSEEIPHAIG…YLELWVKVQR (78 aa)) is the KH type-2 domain.

It belongs to the TRAFAC class TrmE-Era-EngA-EngB-Septin-like GTPase superfamily. Era GTPase family. Monomer.

Its subcellular location is the cytoplasm. It localises to the cell membrane. Functionally, an essential GTPase that binds both GDP and GTP, with rapid nucleotide exchange. Plays a role in 16S rRNA processing and 30S ribosomal subunit biogenesis and possibly also in cell cycle regulation and energy metabolism. In Staphylococcus aureus (strain NCTC 8325 / PS 47), this protein is GTPase Era.